We begin with the raw amino-acid sequence, 209 residues long: PRA1 family protein A1 (209 aa).

4 helical membrane passes run 51–73, 77–99, 144–164, and 166–186; these read LYYY…VLTR, IFAA…GSFS, VFVL…SGLL, and VSVA…LRTP.

Belongs to the PRA1 family.

It localises to the endoplasmic reticulum membrane. Functionally, may be involved in both secretory and endocytic intracellular trafficking in the endosomal/prevacuolar compartments. The sequence is that of PRA1 family protein A1 (PRA1A1) from Arabidopsis thaliana (Mouse-ear cress).